We begin with the raw amino-acid sequence, 201 residues long: Cytochrome c biogenesis ATP-binding export protein CcmA (201 aa).

The region spanning 3–200 (LIAENLGGER…EGAELRMGVA (198 aa)) is the ABC transporter domain. Position 35–42 (35–42 (GPNGSGKS)) interacts with ATP.

It belongs to the ABC transporter superfamily. CcmA exporter (TC 3.A.1.107) family. The complex is composed of two ATP-binding proteins (CcmA) and two transmembrane proteins (CcmB).

The protein localises to the cell inner membrane. It carries out the reaction heme b(in) + ATP + H2O = heme b(out) + ADP + phosphate + H(+). In terms of biological role, part of the ABC transporter complex CcmAB involved in the biogenesis of c-type cytochromes; once thought to export heme, this seems not to be the case, but its exact role is uncertain. Responsible for energy coupling to the transport system. The chain is Cytochrome c biogenesis ATP-binding export protein CcmA from Mesorhizobium japonicum (strain LMG 29417 / CECT 9101 / MAFF 303099) (Mesorhizobium loti (strain MAFF 303099)).